Reading from the N-terminus, the 284-residue chain is Bifunctional protein FolD (284 aa).

NADP(+) is bound by residues 166-168 (GAS) and I232.

The protein belongs to the tetrahydrofolate dehydrogenase/cyclohydrolase family. Homodimer.

It catalyses the reaction (6R)-5,10-methylene-5,6,7,8-tetrahydrofolate + NADP(+) = (6R)-5,10-methenyltetrahydrofolate + NADPH. The enzyme catalyses (6R)-5,10-methenyltetrahydrofolate + H2O = (6R)-10-formyltetrahydrofolate + H(+). Its pathway is one-carbon metabolism; tetrahydrofolate interconversion. Its function is as follows. Catalyzes the oxidation of 5,10-methylenetetrahydrofolate to 5,10-methenyltetrahydrofolate and then the hydrolysis of 5,10-methenyltetrahydrofolate to 10-formyltetrahydrofolate. This Pseudoalteromonas translucida (strain TAC 125) protein is Bifunctional protein FolD.